Consider the following 129-residue polypeptide: LEM domain-containing protein 1 (129 aa).

Positions 1–45 (MVDVKCLSDYELHKHLMKLGFTPGPILPSTRKTYEKKLVQLLASP) constitute an LEM domain. Positions 45–129 (PPWKPPVMKR…RAPRTTSHGA (85 aa)) are disordered. Basic and acidic residues predominate over residues 83 to 97 (SLKKTTLDATRDPRA).

This Mus musculus (Mouse) protein is LEM domain-containing protein 1 (Lemd1).